A 124-amino-acid chain; its full sequence is Small ribosomal subunit protein uS12 (124 aa).

The segment at 1–32 (MPTIQQLVRKGRQDKVEKTKTPALKGSPQRRG) is disordered. Basic and acidic residues predominate over residues 11–20 (GRQDKVEKTK). D89 is modified (3-methylthioaspartic acid).

Belongs to the universal ribosomal protein uS12 family. As to quaternary structure, part of the 30S ribosomal subunit. Contacts proteins S8 and S17. May interact with IF1 in the 30S initiation complex.

In terms of biological role, with S4 and S5 plays an important role in translational accuracy. Functionally, interacts with and stabilizes bases of the 16S rRNA that are involved in tRNA selection in the A site and with the mRNA backbone. Located at the interface of the 30S and 50S subunits, it traverses the body of the 30S subunit contacting proteins on the other side and probably holding the rRNA structure together. The combined cluster of proteins S8, S12 and S17 appears to hold together the shoulder and platform of the 30S subunit. The sequence is that of Small ribosomal subunit protein uS12 from Frankia alni (strain DSM 45986 / CECT 9034 / ACN14a).